The chain runs to 935 residues: ATP-dependent RNA helicase dbp10 (935 aa).

The interval 1 to 51 is disordered; sequence MAPRAASPALSENEFDITGALFQNDSESDNERSSAKSKRQPKKKIPSQDLD. Basic residues predominate over residues 35–45; that stretch reads AKSKRQPKKKI. Residues 89 to 117 carry the Q motif motif; that stretch reads GGFQAMGLSANLLKAIARKGFSVPTPIQR. The Helicase ATP-binding domain maps to 120-292; the sequence is IPVIMDDQDV…RAGLQEPTLI (173 aa). 133–140 is an ATP binding site; the sequence is ARTGSGKT. The short motif at 240–243 is the DEAD box element; it reads DEAD. A Helicase C-terminal domain is found at 360–514; that stretch reads EMEKAVNTKE…HVNFAEDVVA (155 aa). Disordered regions lie at residues 638–674 and 857–935; these read LETKKKRSKANAKSEFLEDAPEGLKTGEGEAGKNEDE and SGKR…SRKR. 3 stretches are compositionally biased toward basic and acidic residues: residues 662–673, 866–881, and 906–916; these read KTGEGEAGKNED, EQAPKRADPLRGDYEK, and SELRNTDDIRI.

The protein belongs to the DEAD box helicase family. DDX54/DBP10 subfamily.

The protein localises to the nucleus. Its subcellular location is the nucleolus. It carries out the reaction ATP + H2O = ADP + phosphate + H(+). Functionally, ATP-binding RNA helicase involved in the biogenesis of 60S ribosomal subunits and is required for the normal formation of 25S and 5.8S rRNAs. In Aspergillus clavatus (strain ATCC 1007 / CBS 513.65 / DSM 816 / NCTC 3887 / NRRL 1 / QM 1276 / 107), this protein is ATP-dependent RNA helicase dbp10 (dbp10).